A 37-amino-acid chain; its full sequence is MKVRASVKRICNNCKIIKRHGVVRVICKEPRHKQRQG.

The protein belongs to the bacterial ribosomal protein bL36 family.

The sequence is that of Large ribosomal subunit protein bL36 from Vesicomyosocius okutanii subsp. Calyptogena okutanii (strain HA).